A 245-amino-acid polypeptide reads, in one-letter code: 1-(5-phosphoribosyl)-5-[(5-phosphoribosylamino)methylideneamino] imidazole-4-carboxamide isomerase (245 aa).

Asp-13 acts as the Proton acceptor in catalysis. The active-site Proton donor is Asp-132.

This sequence belongs to the HisA/HisF family.

It localises to the cytoplasm. The enzyme catalyses 1-(5-phospho-beta-D-ribosyl)-5-[(5-phospho-beta-D-ribosylamino)methylideneamino]imidazole-4-carboxamide = 5-[(5-phospho-1-deoxy-D-ribulos-1-ylimino)methylamino]-1-(5-phospho-beta-D-ribosyl)imidazole-4-carboxamide. It functions in the pathway amino-acid biosynthesis; L-histidine biosynthesis; L-histidine from 5-phospho-alpha-D-ribose 1-diphosphate: step 4/9. In Frankia alni (strain DSM 45986 / CECT 9034 / ACN14a), this protein is 1-(5-phosphoribosyl)-5-[(5-phosphoribosylamino)methylideneamino] imidazole-4-carboxamide isomerase.